A 493-amino-acid polypeptide reads, in one-letter code: Alpha-amylase-related protein (493 aa).

The N-terminal stretch at methionine 1–alanine 19 is a signal peptide. Glutamine 20 carries the pyrrolidone carboxylic acid modification. Cysteine 47 and cysteine 103 are oxidised to a cystine. Positions 117, 168, and 177 each coordinate Ca(2+). The cysteines at positions 156 and 170 are disulfide-linked. Arginine 205 serves as a coordination point for chloride. The active-site Nucleophile is aspartate 207. Histidine 211 provides a ligand contact to Ca(2+). Catalysis depends on glutamate 244, which acts as the Proton donor. 2 residues coordinate chloride: asparagine 307 and arginine 342. 3 disulfide bridges follow: cysteine 375/cysteine 381, cysteine 417/cysteine 440, and cysteine 447/cysteine 459.

It belongs to the glycosyl hydrolase 13 family. In terms of assembly, monomer. Ca(2+) serves as cofactor. It depends on chloride as a cofactor.

It is found in the secreted. The catalysed reaction is Endohydrolysis of (1-&gt;4)-alpha-D-glucosidic linkages in polysaccharides containing three or more (1-&gt;4)-alpha-linked D-glucose units.. This chain is Alpha-amylase-related protein (Amyrel), found in Drosophila orena (Fruit fly).